Here is a 317-residue protein sequence, read N- to C-terminus: Large ribosomal subunit protein uL10z (317 aa).

This sequence belongs to the universal ribosomal protein uL10 family. In terms of assembly, P0 forms a pentameric complex by interaction with dimers of P1 and P2. Post-translationally, phosphorylated.

Functionally, ribosomal protein P0 is the functional equivalent of E.coli protein L10. This Arabidopsis thaliana (Mouse-ear cress) protein is Large ribosomal subunit protein uL10z (RPP0A).